Consider the following 258-residue polypeptide: Phycoerythrobilin:ferredoxin oxidoreductase (258 aa).

Belongs to the HY2 family.

It catalyses the reaction (3Z)-phycoerythrobilin + oxidized 2[4Fe-4S]-[ferredoxin] = 15,16-dihydrobiliverdin + reduced 2[4Fe-4S]-[ferredoxin] + 2 H(+). Its function is as follows. Catalyzes the two-electron reduction of the C2 and C3(1) diene system of 15,16-dihydrobiliverdin. This is Phycoerythrobilin:ferredoxin oxidoreductase from Prochlorococcus marinus (strain NATL2A).